The sequence spans 812 residues: Phenylalanine--tRNA ligase beta subunit (812 aa).

The tRNA-binding domain maps to 39–155 (SKTFAPFTIA…ADAPVGAGYA (117 aa)). The B5 domain maps to 405 to 480 (PEDRVIDFPL…RIVGVDKVPM (76 aa)). Mg(2+) is bound by residues D458, D464, E467, and E468. The region spanning 718-811 (PAFQPVSRDF…VAKRTGGSLR (94 aa)) is the FDX-ACB domain.

The protein belongs to the phenylalanyl-tRNA synthetase beta subunit family. Type 1 subfamily. As to quaternary structure, tetramer of two alpha and two beta subunits. Mg(2+) is required as a cofactor.

It is found in the cytoplasm. The catalysed reaction is tRNA(Phe) + L-phenylalanine + ATP = L-phenylalanyl-tRNA(Phe) + AMP + diphosphate + H(+). This is Phenylalanine--tRNA ligase beta subunit from Nitrobacter winogradskyi (strain ATCC 25391 / DSM 10237 / CIP 104748 / NCIMB 11846 / Nb-255).